The following is a 168-amino-acid chain: HTH-type transcriptional regulator IscR (168 aa).

One can recognise an HTH rrf2-type domain in the interval 2–131; sequence KLTSKGRYAV…DGISLGELMV (130 aa). A DNA-binding region (H-T-H motif) is located at residues 28–51; that stretch reads LADISERQGISLSYLEQLFSKLRK. The [2Fe-2S] cluster site is built by C92, C98, and C104.

[2Fe-2S] cluster serves as cofactor.

Functionally, regulates the transcription of several operons and genes involved in the biogenesis of Fe-S clusters and Fe-S-containing proteins. In Aliivibrio salmonicida (strain LFI1238) (Vibrio salmonicida (strain LFI1238)), this protein is HTH-type transcriptional regulator IscR.